Here is a 448-residue protein sequence, read N- to C-terminus: Immunoglobulin G-binding protein G (448 aa).

Positions 1-33 (MEKEKKVKYFLRKSAFGLASVSAAFLVGSTVFA) are cleaved as a signal peptide. 4 repeat units span residues 104–140 (LAKA…IKDL), 179–215 (LAEA…VKEL), 228–282 (TYKL…TVTE), and 298–352 (TYKL…TVTE). The interval 104-215 (LAKAKADALK…AKTVEGVKEL (112 aa)) is 2 X 37 AA repeats. The interval 228–352 (TYKLILNGKT…DATKTFTVTE (125 aa)) is 2 X 55 AA repeats. The interval 358–422 (PGDAPTEPEK…TLPTTGEGSN (65 aa)) is disordered. The segment covering 384–412 (AKDDAKKDDTKKEDAKKPEAKKDDAKKAE) has biased composition (basic and acidic residues). The tract at residues 386-410 (DDAKKDDTKKEDAKKPEAKKDDAKK) is 5 X 5 AA repeats of [DE]-D-A-K-K. An LPXTG sorting signal motif is present at residues 414 to 418 (LPTTG). Thr-417 is subject to Pentaglycyl murein peptidoglycan amidated threonine. A propeptide spans 418 to 448 (GEGSNPFFTAAALAVMAGAGALAVASKRKED) (removed by sortase).

Its subcellular location is the secreted. The protein resides in the cell wall. Binds to the constant Fc region of IgG with high affinity. The sequence is that of Immunoglobulin G-binding protein G (spg) from Streptococcus sp. group G.